Here is a 360-residue protein sequence, read N- to C-terminus: D-alanine--D-alanine ligase (360 aa).

The ATP-grasp domain occupies 134 to 343; sequence KILAQRVGVP…YTELITRLIE (210 aa). An ATP-binding site is contributed by 169 to 224; the sequence is AEKLGRDMFVKPSNQGSSVGVSHVTNADEYAAALKEAFKYDDKVLVEETVPGTEVE. Asp-297, Glu-310, and Asn-312 together coordinate Mg(2+).

Belongs to the D-alanine--D-alanine ligase family. Requires Mg(2+) as cofactor. The cofactor is Mn(2+).

Its subcellular location is the cytoplasm. The enzyme catalyses 2 D-alanine + ATP = D-alanyl-D-alanine + ADP + phosphate + H(+). It participates in cell wall biogenesis; peptidoglycan biosynthesis. Its function is as follows. Cell wall formation. This is D-alanine--D-alanine ligase from Lactobacillus helveticus (strain DPC 4571).